The sequence spans 255 residues: Pyrroloquinoline-quinone synthase (255 aa).

Belongs to the PqqC family.

It catalyses the reaction 6-(2-amino-2-carboxyethyl)-7,8-dioxo-1,2,3,4,7,8-hexahydroquinoline-2,4-dicarboxylate + 3 O2 = pyrroloquinoline quinone + 2 H2O2 + 2 H2O + H(+). It participates in cofactor biosynthesis; pyrroloquinoline quinone biosynthesis. Ring cyclization and eight-electron oxidation of 3a-(2-amino-2-carboxyethyl)-4,5-dioxo-4,5,6,7,8,9-hexahydroquinoline-7,9-dicarboxylic-acid to PQQ. This is Pyrroloquinoline-quinone synthase from Acinetobacter baylyi (strain ATCC 33305 / BD413 / ADP1).